A 92-amino-acid polypeptide reads, in one-letter code: Small ribosomal subunit protein uS19 (92 aa).

This sequence belongs to the universal ribosomal protein uS19 family.

Protein S19 forms a complex with S13 that binds strongly to the 16S ribosomal RNA. The polypeptide is Small ribosomal subunit protein uS19 (Vibrio campbellii (strain ATCC BAA-1116)).